Consider the following 450-residue polypeptide: Divalent metal cation transporter MntH (450 aa).

A run of 11 helical transmembrane segments spans residues 34–54 (LSFLGPGLLVAVGYMDPGNWI), 61–81 (AQYGYTLLFVILISSLSAMLL), 108–128 (IAIIFWIIAELAIIATDIAEV), 141–161 (IPLIVGALITVLDVFLLLFIM), 170–190 (AIVGTLIFTVLFIFIFEVYIS), 212–232 (GILYIALGIIGATIMPHNLYL), 263–283 (IQLSIAFVVNCLLLVLGASLF), 305–325 (PVLGATMGAIMSTLFAVALLA), 361–381 (SLAVIPVIVCLSIFKGNAAKI), 383–403 (QLLVFSQVFLSIALPFCLIPL), and 422–442 (VNIISWTLIIILSILNVYLIV).

This sequence belongs to the NRAMP family.

It localises to the cell membrane. In terms of biological role, h(+)-stimulated, divalent metal cation uptake system. The polypeptide is Divalent metal cation transporter MntH (Staphylococcus aureus (strain bovine RF122 / ET3-1)).